A 921-amino-acid chain; its full sequence is Phototropin-1A (921 aa).

Over residues 1 to 11 the composition is skewed to gly residues; sequence MASKGTEGGHG. Disordered regions lie at residues 1–59 and 88–118; these read MASK…SPFL and TGLP…QSAA. Low complexity predominate over residues 40–51; sequence SSASSFRTAAAA. A compositionally biased stretch (polar residues) spans 97–117; it reads RPSSGSARTSSEDNPQQQQSA. Residues 123–197 form the PAS 1 domain; it reads VSEELRAALS…KIRQSLANGS (75 aa). Residues 172–177, R190, N205, N215, and Q236 each bind FMN; that span reads NCRFLQ. C173 carries the S-4a-FMN cysteine modification. The region spanning 197–251 is the PAC 1 domain; the sequence is SNYCGRILNYKKDGTPFWNLLTIAPIKDEDGRLLKFIGMQVEVSKYTEGKKDTVV. Residues 286 to 295 show a composition bias toward polar residues; it reads RSLSESSNNT. Disordered stretches follow at residues 286 to 347 and 364 to 390; these read RSLS…NRTR and SVEK…ESFE. 2 stretches are compositionally biased toward basic and acidic residues: residues 312–321 and 364–376; these read PSKRSSESGS and SVEK…RDED. Residues 400 to 473 enclose the PAS 2 domain; that stretch reads RGIDLATTLE…RKIRDAIDNQ (74 aa). FMN is bound by residues 449–454, R467, N482, N492, and Q513; that span reads NCRFLQ. C450 is modified (S-4a-FMN cysteine). One can recognise a PAC 2 domain in the interval 474 to 528; the sequence is AEVTVQLINYTKSGKKFWNLFHLQPMRDQKGDVQYFIGVQLDGTEHVQDDAAKEG. The 288-residue stretch at 594-881 folds into the Protein kinase domain; the sequence is FRPVKPLGSG…ANEIKGHPFF (288 aa). Residues 600–608 and K623 each bind ATP; that span reads LGSGDTGSV. Residue D719 is the Proton acceptor of the active site.

It belongs to the protein kinase superfamily. Ser/Thr protein kinase family. In terms of assembly, homodimer. It depends on FMN as a cofactor. Autophosphorylated in response to blue light irradiation. Post-translationally, 2 molecules of FMN bind covalently to cysteines after exposure to blue light and are reversed in the dark. In terms of tissue distribution, highly expressed in coleoptiles of dark-grown seedlings.

It carries out the reaction L-seryl-[protein] + ATP = O-phospho-L-seryl-[protein] + ADP + H(+). The catalysed reaction is L-threonyl-[protein] + ATP = O-phospho-L-threonyl-[protein] + ADP + H(+). Protein kinase that acts as a blue light photoreceptor in a signal-transduction pathway for phototropic responses. Regulates a wide range of physiological activities in plants that maximize the efficiency of photosynthesis, such as chloroplast relocations, stomata opening, and leaf expansion. This is Phototropin-1A (PHOT1A) from Oryza sativa subsp. japonica (Rice).